An 873-amino-acid chain; its full sequence is Outer membrane usher protein FimC (873 aa).

The N-terminal stretch at 1–15 (MKQIPLILAMSLAFA) is a signal peptide. Cysteine 815 and cysteine 838 are joined by a disulfide.

This sequence belongs to the fimbrial export usher family.

It is found in the cell outer membrane. Probable porin-like protein necessary for the assembly of a pilin-type protein. In Bordetella pertussis (strain Tohama I / ATCC BAA-589 / NCTC 13251), this protein is Outer membrane usher protein FimC (fimC).